The chain runs to 403 residues: uncharacterized protein (403 aa).

Helical transmembrane passes span 25 to 47 (IAFF…ILFL), 62 to 81 (SLSA…GPLS), 88 to 110 (VVMS…MNSW), 114 to 136 (IFMR…TYLS), 143 to 165 (VLSF…GRFL), 175 to 197 (WNIA…VYLL), 229 to 251 (LFFM…GYRL), 256 to 278 (FFLG…YSSP), 290 to 307 (GVIL…VLIT), 311 to 330 (IVLL…FAAH), 350 to 372 (SIYL…IFWI), and 376 to 398 (WLGI…IRLL).

The protein belongs to the major facilitator superfamily.

The protein resides in the cell membrane. This is an uncharacterized protein from Buchnera aphidicola subsp. Baizongia pistaciae (strain Bp).